The primary structure comprises 350 residues: Ferredoxin--NADP reductase (350 aa).

7 residues coordinate FAD: aspartate 49, glutamine 57, tyrosine 62, valine 102, phenylalanine 136, aspartate 303, and threonine 344.

Belongs to the ferredoxin--NADP reductase type 2 family. As to quaternary structure, homodimer. Requires FAD as cofactor.

It carries out the reaction 2 reduced [2Fe-2S]-[ferredoxin] + NADP(+) + H(+) = 2 oxidized [2Fe-2S]-[ferredoxin] + NADPH. The chain is Ferredoxin--NADP reductase from Granulibacter bethesdensis (strain ATCC BAA-1260 / CGDNIH1).